We begin with the raw amino-acid sequence, 111 residues long: Translation initiation factor 1A (111 aa).

One can recognise an S1-like domain in the interval 12-86 (GEMPLPSEDE…KKGEVVYRYL (75 aa)).

The protein belongs to the eIF-1A family.

Functionally, seems to be required for maximal rate of protein biosynthesis. Enhances ribosome dissociation into subunits and stabilizes the binding of the initiator Met-tRNA(I) to 40 S ribosomal subunits. This Aeropyrum pernix (strain ATCC 700893 / DSM 11879 / JCM 9820 / NBRC 100138 / K1) protein is Translation initiation factor 1A (eIF1A).